The chain runs to 543 residues: uncharacterized protein (543 aa).

A TRAM domain is found at 1 to 59; it reads MLKKNDIVEVEIVDLTHEGAGVAKVDGLVFFVENALPSEKILMRVLKVNKKIGFGKVEK. 4 residues coordinate S-adenosyl-L-methionine: Gln283, Tyr312, Glu333, and Asp381. The Nucleophile role is filled by Cys408.

The protein belongs to the class I-like SAM-binding methyltransferase superfamily. RNA M5U methyltransferase family.

This is an uncharacterized protein from Streptococcus pneumoniae serotype 4 (strain ATCC BAA-334 / TIGR4).